The sequence spans 343 residues: Mitotic checkpoint protein bub-3 (343 aa).

WD repeat units follow at residues 21-62, 67-105, 107-146, 150-187, 192-232, 249-288, and 291-331; these read PPFV…DISE, THGK…GTQL, SHAL…NGAI, NVSS…EPLQ, PLKY…EMMK, ELIH…RIIQ, and KFET…NSIT. Residues 322–343 form a disordered region; that stretch reads PSPLPNNSITIRHITDPESRPK. Basic and acidic residues predominate over residues 334 to 343; the sequence is HITDPESRPK.

It belongs to the WD repeat BUB3 family. As to quaternary structure, may interact with bub-1; for localization at the kinetochore and the onset of anaphase.

It is found in the chromosome. The protein resides in the centromere. Its subcellular location is the kinetochore. The protein localises to the nucleus. Has a dual function in spindle-assembly checkpoint signaling and in promoting the establishment of correct kinetochore-microtubule (K-MT) attachments. Promotes the formation of stable end-on bipolar attachments of chromosomes. Necessary for expression and kinetochore localization of bub-1. Plays a role in synapsis checkpoint signaling inducing apoptosis in response to unsynapsed chromosomes and thus controlling chromosomal segregation during oocyte meiosis. The chain is Mitotic checkpoint protein bub-3 from Caenorhabditis elegans.